Reading from the N-terminus, the 158-residue chain is 14-3-3 protein gamma (158 aa).

The interval 1 to 158 (AAAMKNVTEL…TSDQQDDDGG (158 aa)) is interaction with SPATA18/MIEAP. Serine 48 carries the post-translational modification Phosphoserine. Tyrosine 60 carries the post-translational modification Phosphotyrosine. Position 72 is a phosphothreonine (threonine 72). A Phosphoserine modification is found at serine 130. Position 149 is a phosphothreonine (threonine 149). Serine 150 carries the post-translational modification Phosphoserine.

Belongs to the 14-3-3 family. Homodimer. Part of a complex that contains DSG3, PKP1, YAP1 and YWHAG; the complex is required for localization of DSG3 and YAP1 to the cell membrane in keratinocytes. Interacts with SAMSN1. Interacts with RAF1, SSH1 and CRTC2/TORC2. Interacts with ABL1 (phosphorylated form); the interaction retains it in the cytoplasm. Interacts with GAB2. Interacts with MDM4 (phosphorylated); negatively regulates MDM4 activity toward TP53. Interacts with PKA-phosphorylated AANAT and SIRT2. Interacts with the 'Thr-369' phosphorylated form of DAPK2. Interacts with PI4KB, TBC1D22A and TBC1D22B. Interacts with SLITRK1. Interacts with LRRK2; this interaction is dependent on LRRK2 phosphorylation. Interacts with MARK2 and MARK3. Interacts with MEFV. Interacts with ENDOG, TSC2 and PIK3C3; interaction with ENDOG weakens its interaction with TSC2 and PIK3C3. Interacts with (phosphorylated) WDR24. Interacts with BEST1; this interaction promotes L-glutamate channel activity leading to the positive regulation of NMDA glutamate receptor activity through the L-glutamate secretion. Interacts with PKP1 (when phosphorylated); the interaction results in translocation of PKP1 to the cytoplasm and loss of intercellular adhesion in keratinocytes. Interacts with SPATA18/MIEAP; a protein that also plays a role in MALM. In terms of processing, phosphorylated by various PKC isozymes.

It is found in the cytoplasm. It localises to the cytosol. Its subcellular location is the mitochondrion matrix. Functionally, adapter protein implicated in the regulation of a large spectrum of both general and specialized signaling pathways. Binds to a large number of partners, usually by recognition of a phosphoserine or phosphothreonine motif. Binding generally results in the modulation of the activity of the binding partner. Promotes inactivation of WDR24 component of the GATOR2 complex by binding to phosphorylated WDR24. Participates in the positive regulation of NMDA glutamate receptor activity by promoting the L-glutamate secretion through interaction with BEST1. Reduces keratinocyte intercellular adhesion, via interacting with PKP1 and sequestering it in the cytoplasm, thereby reducing its incorporation into desmosomes. Plays a role in mitochondrial protein catabolic process (also named MALM) that promotes the degradation of damaged proteins inside mitochondria. The polypeptide is 14-3-3 protein gamma (Ovis aries (Sheep)).